A 719-amino-acid chain; its full sequence is Ferric reductase transmembrane component 4 (719 aa).

The signal sequence occupies residues 1–18; it reads MLLVHIISFLLFFQLSAA. Topologically, residues 19 to 156 are extracellular; the sequence is KAPPSKTSLI…YGYYYNHDIP (138 aa). Residues N51, N80, N101, N113, N127, and N135 are each glycosylated (N-linked (GlcNAc...) asparagine). Residues 157–177 form a helical membrane-spanning segment; it reads YYFGGIICAYFVGVMLLAGLI. Residues 178 to 228 lie on the Cytoplasmic side of the membrane; the sequence is RFLNYTPIKKIMFQQKLVNYVRGYTTLPTLYEKHAEPFSYLKVITGYLPTR. A helical membrane pass occupies residues 229 to 249; sequence FETLVILGYLILHTIFMAYKY. Residues 250–267 lie on the Extracellular side of the membrane; sequence QYDPYHIIFAAHRAEVAH. A helical membrane pass occupies residues 268–288; it reads FVAYRSGILSFAHLPLIVLFA. In terms of domain architecture, Ferric oxidoreductase spans 273–407; sequence SGILSFAHLP…SGIEWIYAAI (135 aa). Residues 289–304 are Cytoplasmic-facing; sequence GRNNFLQLISGLKHTS. Residues 305 to 325 form a helical membrane-spanning segment; that stretch reads FIVFHKWLGRMMFLDAIIHAA. H309 and H323 together coordinate heme. Topologically, residues 326-346 are extracellular; it reads GFTNYYLYYKKWNTVRLRVYW. Residues 347–367 traverse the membrane as a helical segment; that stretch reads KFGIATTCLAGMLIFFSIAAF. The Cytoplasmic portion of the chain corresponds to 368 to 373; it reads RRHYYE. A helical membrane pass occupies residues 374 to 394; the sequence is TFMALHIVFAALFLYTCWEHV. Heme-binding residues include H379 and H393. T395 is a topological domain (extracellular). The helical transmembrane segment at 396–416 threads the bilayer; the sequence is NFSGIEWIYAAIAIWGVDRIV. Residues 408 to 527 form the FAD-binding FR-type domain; that stretch reads AIWGVDRIVR…EGPYGSKSTA (120 aa). Residues 417 to 719 lie on the Cytoplasmic side of the membrane; sequence RITRIALLGF…IEYLEEYQAW (303 aa). 472 to 478 is an FAD binding site; that stretch reads HPFTVMD. 519–522 contributes to the NADP(+) binding site; sequence GPYG. Composition is skewed to polar residues over residues 606–618 and 625–643; these read EKISSNEVKNGET and SSLSNSEKAPSESENTELP. Positions 606-643 are disordered; it reads EKISSNEVKNGETTAEKAPSSLSNSEKAPSESENTELP. 685-686 is an NADP(+) binding site; that stretch reads CG.

The protein belongs to the ferric reductase (FRE) family. The cofactor is FAD.

It is found in the cell membrane. It carries out the reaction 2 a Fe(II)-siderophore + NADP(+) + H(+) = 2 a Fe(III)-siderophore + NADPH. Its function is as follows. Siderophore-iron reductase responsible for reducing extracellular iron prior to import. Catalyzes the reductive uptake of Fe(3+) bound to dihydroxamate rhodotorulic acid. Fe(3+) is reduced to Fe(2+), which then dissociates from the siderophore and can be imported by the high-affinity Fe(2+) transport complex in the plasma membrane. The sequence is that of Ferric reductase transmembrane component 4 (FRE4) from Saccharomyces cerevisiae (strain ATCC 204508 / S288c) (Baker's yeast).